A 215-amino-acid polypeptide reads, in one-letter code: Octanoyltransferase (215 aa).

A BPL/LPL catalytic domain is found at 42–215; sequence QNTPDEIWLL…AEKLKARLKQ (174 aa). Substrate contacts are provided by residues 81-88, 148-150, and 161-163; these read RGGQITYH, ALG, and GLA. Catalysis depends on C179, which acts as the Acyl-thioester intermediate.

The protein belongs to the LipB family.

It localises to the cytoplasm. The enzyme catalyses octanoyl-[ACP] + L-lysyl-[protein] = N(6)-octanoyl-L-lysyl-[protein] + holo-[ACP] + H(+). It functions in the pathway protein modification; protein lipoylation via endogenous pathway; protein N(6)-(lipoyl)lysine from octanoyl-[acyl-carrier-protein]: step 1/2. In terms of biological role, catalyzes the transfer of endogenously produced octanoic acid from octanoyl-acyl-carrier-protein onto the lipoyl domains of lipoate-dependent enzymes. Lipoyl-ACP can also act as a substrate although octanoyl-ACP is likely to be the physiological substrate. This is Octanoyltransferase from Nitrosospira multiformis (strain ATCC 25196 / NCIMB 11849 / C 71).